The following is a 201-amino-acid chain: Retinol-binding protein 4 (201 aa).

Residues 1-18 (MEWVWALVLLAALGGGSA) form the signal peptide. Intrachain disulfides connect Cys22–Cys178, Cys88–Cys192, and Cys138–Cys147. Gln116 is a substrate binding site. Arg139 carries the omega-N-methylarginine modification.

Belongs to the calycin superfamily. Lipocalin family. Interacts with TTR. Interaction with TTR prevents its loss by filtration through the kidney glomeruli. Interacts with STRA6.

The protein localises to the secreted. Functionally, retinol-binding protein that mediates retinol transport in blood plasma. Delivers retinol from the liver stores to the peripheral tissues. Transfers the bound all-trans retinol to STRA6, that then facilitates retinol transport across the cell membrane. This Mus musculus (Mouse) protein is Retinol-binding protein 4 (Rbp4).